The chain runs to 151 residues: UPF0178 protein PST_0536 (151 aa).

This sequence belongs to the UPF0178 family.

The protein is UPF0178 protein PST_0536 of Stutzerimonas stutzeri (strain A1501) (Pseudomonas stutzeri).